The primary structure comprises 297 residues: Glycerol-3-phosphate dehydrogenase [NAD(P)+] (297 aa).

3 residues coordinate NADPH: Trp11, Arg30, and Lys79. Residues Lys79, Gly107, and Ser109 each coordinate sn-glycerol 3-phosphate. An NADPH-binding site is contributed by Ala111. Sn-glycerol 3-phosphate is bound by residues Lys161, Asp214, Ser224, Arg225, and Asn226. Lys161 (proton acceptor) is an active-site residue. Arg225 lines the NADPH pocket. Residues Val249 and Glu251 each contribute to the NADPH site.

The protein belongs to the NAD-dependent glycerol-3-phosphate dehydrogenase family.

The protein resides in the cytoplasm. It carries out the reaction sn-glycerol 3-phosphate + NAD(+) = dihydroxyacetone phosphate + NADH + H(+). The enzyme catalyses sn-glycerol 3-phosphate + NADP(+) = dihydroxyacetone phosphate + NADPH + H(+). It participates in membrane lipid metabolism; glycerophospholipid metabolism. In terms of biological role, catalyzes the reduction of the glycolytic intermediate dihydroxyacetone phosphate (DHAP) to sn-glycerol 3-phosphate (G3P), the key precursor for phospholipid synthesis. This is Glycerol-3-phosphate dehydrogenase [NAD(P)+] from Wolinella succinogenes (strain ATCC 29543 / DSM 1740 / CCUG 13145 / JCM 31913 / LMG 7466 / NCTC 11488 / FDC 602W) (Vibrio succinogenes).